The sequence spans 385 residues: Basigin (385 aa).

An N-terminal signal peptide occupies residues Met1–Gly21. Residues Gly37–Thr120 form the Ig-like domain. 3 disulfides stabilise this stretch: Cys44-Cys108, Cys157-Cys203, and Cys242-Cys301. Positions Glu138 to Gly219 constitute an Ig-like C2-type domain. The Extracellular segment spans residues Glu138 to Ala323. The N-linked (GlcNAc...) asparagine glycan is linked to Asn160. The interval Asp195 to Gly199 is essential for interaction with KDR/VEGFR2. One can recognise an Ig-like V-type domain in the interval Pro221 to Thr315. N-linked (GlcNAc...) asparagine glycosylation is found at Asn268 and Asn302. The chain crosses the membrane as a helical span at residues Ala324 to Ile344. Over Tyr345 to Ser385 the chain is Cytoplasmic. Residues Asp353–Ser385 form a disordered region. Ser362 and Ser368 each carry phosphoserine.

As to quaternary structure, homooligomer. Interacts with NXNL1. Interacts with SLC2A1 and SLC16A1/GLUT1. Interacts with XKR8; promoting its localization at the cell membrane. In terms of assembly, (Microbial infection) Interacts with P.falciparum (isolate 3D7) RH5/PfRH5; the interaction is required for the invasion of the host erythrocytes by the parasite at the merozoite stage. Homooligomer. Forms heterooligomers with isoform 3. Interacts with VEGFA and KDR/VEGFR2. Interacts with PPIA/CYPA. Interacts with PPIL2; regulates BSG transport to the cell membrane. Interacts with SLC16A1; interaction mediates SLC16A3 targeting to the plasma membrane. Interacts with SLC16A12. Interacts with SLC16A11. Interacts with AJAP1. Interacts with SLC1A3, ATP1B2, MAG and L1CAM. Interacts with SLC16A3; interaction mediates SLC16A3 targeting to the plasma membrane. As to quaternary structure, (Microbial infection) Interacts with P.falciparum (isolates 3D7 or 7G8) RH5/PfRH5; the interaction is required for the invasion of the host erythrocytes by the parasite at the merozoite stage. In terms of assembly, (Microbial infection) Does not interact with severe acute respiratory syndrome coronavirus 2 (SARS-CoV-2) spike glycoprotein, even if previous works were based on a putative interaction. Forms heterooligomers with isoform 2. As to quaternary structure, interacts with SLC16A6; this interaction mediates targeting to the plasma membrane. N-glycosylated. Retina-specific. Expressed in retinal cone photoreceptors (at protein level). In terms of tissue distribution, expressed in erythrocytes (at protein level). Highly expressed in melanoma cell lines (at protein level). Highly expressed in the heart, kidney, skeletal muscle and testis. As to expression, highly expressed in the bone marrow, fetal liver, lung, testis and thymus.

It localises to the melanosome. It is found in the cell membrane. The protein resides in the photoreceptor inner segment. The protein localises to the cell projection. Its subcellular location is the cilium. It localises to the photoreceptor outer segment. It is found in the endosome. The protein resides in the endoplasmic reticulum membrane. The protein localises to the basolateral cell membrane. In terms of biological role, essential for normal retinal maturation and development. Acts as a retinal cell surface receptor for NXNL1 and plays an important role in NXNL1-mediated survival of retinal cone photoreceptors. In association with glucose transporter SLC16A1/GLUT1 and NXNL1, promotes retinal cone survival by enhancing aerobic glycolysis and accelerating the entry of glucose into photoreceptors. May act as a potent stimulator of IL6 secretion in multiple cell lines that include monocytes. Functionally, (Microbial infection) Erythrocyte receptor for P.falciparum RH5 which is essential for erythrocyte invasion by the merozoite stage of P.falciparum isolates 3D7 and Dd2. Signaling receptor for cyclophilins, essential for PPIA/CYPA and PPIB/CYPB-dependent signaling related to chemotaxis and adhesion of immune cells. Plays an important role in targeting monocarboxylate transporters SLC16A1/GLUT1, SLC16A11 and SLC16A12 to the plasma membrane. Acts as a coreceptor for vascular endothelial growth factor receptor 2 (KDR/VEGFR2) in endothelial cells enhancing its VEGFA-mediated activation and downstream signaling. Promotes angiogenesis through EPAS1/HIF2A-mediated up-regulation of VEGFA (isoform VEGF-165 and VEGF-121) and KDR/VEGFR2 in endothelial cells. Plays a key role in regulating tumor growth, invasion, metastasis and neoangiogenesis by stimulating the production and release of extracellular matrix metalloproteinases and KDR/VEGFR2 by both tumor cells and stromal cells (fibroblasts and endothelial cells). Its function is as follows. (Microbial infection) Erythrocyte receptor for P.falciparum RH5 which is essential for erythrocyte invasion by the merozoite stage of P.falciparum isolates 3D7, Dd2, 7G8 and HB3. Binding of P.falciparum RH5 results in BSG dimerization which triggers an increase in intracellular Ca(2+) in the erythrocyte. This essential step leads to a rearrangement of the erythrocyte cytoskeleton required for the merozoite invasion. In terms of biological role, (Microbial infection) Can facilitate human SARS coronavirus (SARS-CoV-1) infection via its interaction with virus-associated PPIA/CYPA. Functionally, (Microbial infection) Can facilitate HIV-1 infection via its interaction with virus-associated PPIA/CYPA. (Microbial infection) First described as a receptor for severe acute respiratory syndrome coronavirus 2 (SARS-CoV-2), it is not required for SARS-CoV-2 infection. Its function is as follows. (Microbial infection) Acts as a receptor for measles virus. In terms of biological role, (Microbial infection) Promotes entry of pentamer-expressing human cytomegalovirus (HCMV) into epithelial and endothelial cells. This is Basigin from Homo sapiens (Human).